The chain runs to 495 residues: UDP-glycosyltransferase 73C12 (495 aa).

His-24 acts as the Proton acceptor in catalysis. Position 24 (His-24) interacts with an anthocyanidin. Asp-129 functions as the Charge relay in the catalytic mechanism. UDP-alpha-D-glucose-binding residues include Ala-356, Gln-358, His-373, Trp-376, Asn-377, Ser-378, and Glu-381. Residue Ala-396 participates in an anthocyanidin binding. UDP-alpha-D-glucose is bound by residues Asp-397 and Gln-398.

It belongs to the UDP-glycosyltransferase family.

It carries out the reaction oleanolate + UDP-alpha-D-glucose = oleanolate 3-O-beta-D-glucoside + UDP + H(+). Catalyzes the transfer of a glucose (Glc) moiety from UDP-Glc to the C-3 position of the oleanane sapogenins oleanolate and hederagenin, and to the C-28 carboxylic group of the lupane sapogenin betulinate. The monoglucosylated hederagenin 3-O-beta-D-glucoside is a feeding deterrent of the yellow-striped flea beetle (Phyllotreta nemorum). This is UDP-glycosyltransferase 73C12 from Barbarea vulgaris (Yellow rocket).